We begin with the raw amino-acid sequence, 71 residues long: Small ribosomal subunit protein bS21 (71 aa).

The tract at residues 39-71 (EKPTQERKRKAAAAVKRQMRRTSRDVTKRKRLY) is disordered. Residues 45-71 (RKRKAAAAVKRQMRRTSRDVTKRKRLY) show a composition bias toward basic residues.

The protein belongs to the bacterial ribosomal protein bS21 family.

In Xylella fastidiosa (strain M12), this protein is Small ribosomal subunit protein bS21.